A 95-amino-acid chain; its full sequence is Integration host factor subunit beta (95 aa).

Residues 56 to 76 (RAPRTGRNPKTGTSVDLDGKY) are disordered.

It belongs to the bacterial histone-like protein family. Heterodimer of an alpha and a beta chain.

This protein is one of the two subunits of integration host factor, a specific DNA-binding protein that functions in genetic recombination as well as in transcriptional and translational control. In Shewanella sediminis (strain HAW-EB3), this protein is Integration host factor subunit beta.